We begin with the raw amino-acid sequence, 135 residues long: Small ribosomal subunit protein bS6 (135 aa).

The interval 99–135 is disordered; it reads EKSAMLSHLDRNAHAGQDEERSRSPRRQRENAIERVE.

The protein belongs to the bacterial ribosomal protein bS6 family.

Functionally, binds together with bS18 to 16S ribosomal RNA. The polypeptide is Small ribosomal subunit protein bS6 (Bartonella tribocorum (strain CIP 105476 / IBS 506)).